A 918-amino-acid chain; its full sequence is MSALRIWLMQALLIFLTTESIGQLVEPCGYIYPEFPVVQRGSNFTATCVLKEKCLQVYSVNATYIVWKTNHVAVPKEQVTVINRTASSVTFTDVVFQNVQLTCNILSFGQIEQNVYGITILSGYPPDIPTNLSCIVNEGKNMLCQLDPGRETYLETNYTLKSEWATEKFPDCRTKHGTSSCMMGYTPIYFVNIEVWVEAENALGNVSSEPINFDPVDKVKPSPPHNLSVTNSEELSSILKLAWVNSGLDSILRLKSDIQYRTKDASTWIQVPLEDTVSPRTSFTVQDLKPFTEYVFRIRSIKENGKGYWSDWSEEASGTTYEDRPSKAPSFWYKVNANHPQEYRSARLIWKTLPLSEANGKILDYEVVLTQSKSVSQTYTVNGTELIVNLTNNRYVASLAARNVVGKSPATVLTIPGSHFKASHPVVDLKAFPKDNLLWVEWTPPSKPVNKYILEWCVLSENSPCIPDWQQEDGTVNRTHLRGSLLESKCYLITVTPVFPGGPGSPESMKAYLKQAAPSKGPTVRTKKVGKNEAVLEWDHLPVDVQNGFIRNYSISYRTSVGKEMVVRVDSSHTEYTLSSLSSDTLYMVHMAAYTEEGGKDGPEFTFTTLKFAQGEIEAIVVPVCLAFLLTTLLGVLFCFNKRDLIKKHIWPNVPDPSKSHIAQWSPHTPPRHNFNSKDQMYSDANFTDVSVVEIEANNKKPCPDDLKSLDLFKKEKISTEGHSSGIGGSSCMSSSRPSISSSEENESAQSTASTVQYSTVVHSGYRHQVPSVQVFSRSESTQPLLDSEERPEDLQLVDSVDSGDEILPRQQYFKQSCSQPGASPDVSHFGRSSQVPSGSEEDFVRLKQQQVSDHISEPYGSEQRRLFQEGSVADALGTGTDGQIERFESVGMETAMDEDISKSYLPQTVRQGGYMPQ.

The N-terminal stretch at 1-22 is a signal peptide; the sequence is MSALRIWLMQALLIFLTTESIG. Over 23-618 the chain is Extracellular; the sequence is QLVEPCGYIY…TLKFAQGEIE (596 aa). An Ig-like C2-type domain is found at 26 to 120; sequence EPCGYIYPEF…IEQNVYGITI (95 aa). 2 cysteine pairs are disulfide-bonded: Cys-28/Cys-54 and Cys-48/Cys-103. N-linked (GlcNAc...) asparagine glycans are attached at residues Asn-43, Asn-61, Asn-83, and Asn-131. 5 Fibronectin type-III domains span residues 125–215, 223–323, 328–418, 422–516, and 518–612; these read PPDI…NFDP, PPHN…TYED, APSF…IPGS, ASHP…LKQA, and PSKG…TLKF. Cys-134 and Cys-144 are disulfide-bonded. N-linked (GlcNAc...) asparagine glycosylation is present at Asn-157. A disulfide bridge connects residues Cys-172 and Cys-181. 2 N-linked (GlcNAc...) asparagine glycosylation sites follow: Asn-205 and Asn-226. A WSXWS motif motif is present at residues 309–313; the sequence is WSDWS. Asn-382 and Asn-389 each carry an N-linked (GlcNAc...) asparagine glycan. An intrachain disulfide couples Cys-457 to Cys-465. N-linked (GlcNAc...) asparagine glycans are attached at residues Asn-477 and Asn-552. A helical membrane pass occupies residues 619–640; it reads AIVVPVCLAFLLTTLLGVLFCF. The Cytoplasmic portion of the chain corresponds to 641–918; sequence NKRDLIKKHI…TVRQGGYMPQ (278 aa). A Box 1 motif motif is present at residues 650–658; it reads IWPNVPDPS. Disordered regions lie at residues 659-679, 720-754, 773-795, and 817-842; these read KSHI…NSKD, TEGH…STAS, VQVF…PEDL, and SCSQ…GSEE. Residues Ser-660 and Ser-666 each carry the phosphoserine modification. Residues 730 to 751 show a composition bias toward low complexity; the sequence is SSCMSSSRPSISSSEENESAQS. Residues 773-785 are compositionally biased toward polar residues; it reads VQVFSRSESTQPL. Ser-781, Ser-788, Ser-828, and Ser-838 each carry phosphoserine.

Belongs to the type I cytokine receptor family. Type 2 subfamily. As to quaternary structure, component of a hexamer of two molecules each of IL6, IL6R and IL6ST; associates with the complex IL6:IL6R but does not interact with IL6. Forms heterodimers composed of LIFR and IL6ST (type I OSM receptor) which are activated by LIF and OSM. Also forms heterodimers composed of OSMR and IL6ST (type II receptor) which are activated by OSM but not by LIF. Interacts with HCK. Interacts with INPP5D/SHIP1. Interacts with SRC and YES. Interacts with ARMH4; this interaction prevents IL6ST protein homodimerization and bridges ARMH4 with IL6R and STAT3 and therefore inhibits phosphorylation of STAT3 at 'Tyr-705'. Post-translationally, phosphorylation of Ser-781 down-regulates cell surface expression. Heavily N-glycosylated. Glycosylation is required for protein stability and localization in plasma membrane but not for ligand binding. Found in hepatocytes, astrocytes, fibroblasts and endothelial cells.

It is found in the cell membrane. Functionally, signal-transducing molecule. The receptor systems for IL6, LIF, OSM, CNTF, IL11, CTF1 and BSF3 can utilize IL6ST for initiating signal transmission. Binding of IL6 to IL6R induces IL6ST homodimerization and formation of a high-affinity receptor complex, which activates the intracellular JAK-MAPK and JAK-STAT3 signaling pathways. That causes phosphorylation of IL6ST tyrosine residues which in turn activates STAT3. In parallel, the IL6 signaling pathway induces the expression of two cytokine receptor signaling inhibitors, SOCS1 and SOCS3, which inhibit JAK and terminate the activity of the IL6 signaling pathway as a negative feedback loop. Also activates the yes-associated protein 1 (YAP) and NOTCH pathways to control inflammation-induced epithelial regeneration, independently of STAT3. Mediates signals which regulate immune response, hematopoiesis, pain control and bone metabolism. Has a role in embryonic development. Essential for survival of motor and sensory neurons and for differentiation of astrocytes. Required for expression of TRPA1 in nociceptive neurons. Required for the maintenance of PTH1R expression in the osteoblast lineage and for the stimulation of PTH-induced osteoblast differentiation. Required for normal trabecular bone mass and cortical bone composition. The chain is Interleukin-6 receptor subunit beta from Rattus norvegicus (Rat).